Reading from the N-terminus, the 773-residue chain is MDLNTYLKLLNLLDSESQKIMLELQAMFSAAGLALRGRGTHTDGIIVKGNLTVLHSSDVPSHSLFTPGKKYDVIFRHANIVGGAKDDALINGRGSAIRIGNIGDDLSKPRLLDLVLNTGEVFGLPTARLYHQFFGSDFHQKSDMLASGSLRRYAVEAALRNPDSFTELYYHTQLCYEWVDSKKKSRYARFRLLNPNQSTEGGLLDDSVEIGPRLVLPRKRGDTREKNYLRNEFRQRLTDGNIVEYVLQAQFRSIEDVAVDCSNIWDPNTYPWLDIAAIVLNQDESENDYYQEIAYNPGNTHYDLKLPNSYSVDDFASLGVSGALVHYFGSIVRAERTQYLYGSKDDLPGKPVYFPLPVTEIPSKRFLFLLEKYNFLTDNSYPSDGEHDKIEALVSAMPTTALDLAVGTTDPTDIPDSYFLERRLNGYNPGAIRESSGQEGWTHELTHNLAKYDIKPGLHFPDFVQCRLFVDKQNGVKLHSIKIDDHEITPCQEQWQYAKRTYLQAEFLSQELKLHLARCHFNIEQYVMAIKRRLAPTHPVRAFINPHLEGLIFINSSAVPKIIGSTGFIPIASMLTQGSIVDVMKNELSKLSYMWNPIADLPRDIPGDLFTPAATAYWELLNNYVEQGLLQPFEDELRTEVNAIQVDELFAELKERSLYSGDQPPKYDSSELKSLLMYIIYHSSFLHSWANFKQYDDAGNPNHVSMGDYSQYDQQTQDKIRFSQRSLTWVLSSIRYNSVAVYGSDLLKQLIREKSSILEPGLPLEDLMMSINI.

The Lipoxygenase domain maps to 176–773 (YEWVDSKKKS…LEDLMMSINI (598 aa)). Fe cation contacts are provided by histidine 515, histidine 520, and isoleucine 773.

This sequence belongs to the lipoxygenase family.

It carries out the reaction (9Z,12Z,15Z)-octadecatrienoate + O2 = (9R,10E,12Z,15Z)-9-hydroperoxyoctadeca-10,12,15-trienoate. It participates in lipid metabolism; oxylipin biosynthesis. Its function is as follows. Catalyzes the conversion of alpha-linoleate to (9R,10E,12Z,15Z)-9-hydroperoxyoctadeca-10,12,15-trienoate in oxylipin biosynthesis. Also converts alpha-linoleate to (9R,10E,12Z)-9-hydroperoxyoctadeca-10,12-dienoate. This is Linolenate 9R-lipoxygenase from Nostoc sp. (strain PCC 7120 / SAG 25.82 / UTEX 2576).